We begin with the raw amino-acid sequence, 430 residues long: Adenylosuccinate synthetase (430 aa).

GTP-binding positions include 12-18 (GDEGKGK) and 40-42 (GHT). Asp13 serves as the catalytic Proton acceptor. Positions 13 and 40 each coordinate Mg(2+). IMP is bound by residues 13-16 (DEGK), 38-41 (NAGH), Thr128, Arg142, Gln223, Thr238, and Arg302. The active-site Proton donor is the His41. 298 to 304 (TTTGRPR) contacts substrate. Residues Arg304, 330–332 (SID), and 412–414 (SVG) each bind GTP.

It belongs to the adenylosuccinate synthetase family. In terms of assembly, homodimer. Mg(2+) is required as a cofactor.

It localises to the cytoplasm. It carries out the reaction IMP + L-aspartate + GTP = N(6)-(1,2-dicarboxyethyl)-AMP + GDP + phosphate + 2 H(+). Its pathway is purine metabolism; AMP biosynthesis via de novo pathway; AMP from IMP: step 1/2. Its function is as follows. Plays an important role in the de novo pathway of purine nucleotide biosynthesis. Catalyzes the first committed step in the biosynthesis of AMP from IMP. The sequence is that of Adenylosuccinate synthetase from Streptococcus uberis (strain ATCC BAA-854 / 0140J).